The following is a 979-amino-acid chain: Zinc finger protein 280D (979 aa).

Glycyl lysine isopeptide (Lys-Gly) (interchain with G-Cter in SUMO2) cross-links involve residues Lys-32, Lys-34, Lys-74, and Lys-87. A compositionally biased stretch (polar residues) spans 89–101 (TSQHYTNPTSNPV). Positions 89 to 119 (TSQHYTNPTSNPVPASPINFHPESRSSDSSV) are disordered. The residue at position 104 (Ser-104) is a Phosphoserine. Glycyl lysine isopeptide (Lys-Gly) (interchain with G-Cter in SUMO2) cross-links involve residues Lys-126 and Lys-140. The tract at residues 157 to 236 (YQGGPTLSMA…TSSNQSKNGT (80 aa)) is disordered. Over residues 169–187 (SESSFLSKRPSTSEVNNVN) the composition is skewed to polar residues. Glycyl lysine isopeptide (Lys-Gly) (interchain with G-Cter in SUMO2) cross-links involve residues Lys-189, Lys-210, Lys-223, Lys-233, Lys-275, Lys-284, and Lys-292. Residues 195 to 235 (ESVSGANSSAVLPSVKSPSVTSSQAMLAKGTNTSSNQSKNG) show a composition bias toward polar residues. C2H2-type zinc fingers lie at residues 321-343 (FKCF…MKHH) and 358-381 (TTCQ…ESTH). Residues 388 to 412 (TICKICELSFETEHVLLQHMKDNHK) form a C2H2-type 3; degenerate zinc finger. 2 C2H2-type zinc fingers span residues 418-441 (YVCQ…RTSH) and 449-469 (CPFC…YMKH). Disordered stretches follow at residues 523–608 (GPLQ…NKKS), 739–809 (LKKE…SDKE), and 896–979 (FLRK…KERS). The segment covering 527–541 (SGASPTPSISASAST) has biased composition (low complexity). Polar residues-rich tracts occupy residues 542–584 (LQLS…NGSK) and 592–608 (SNMQ…NKKS). The residue at position 545 (Ser-545) is a Phosphoserine. A Glycyl lysine isopeptide (Lys-Gly) (interchain with G-Cter in SUMO2) cross-link involves residue Lys-550. The span at 739 to 784 (LKKEAPAKEQEPVSKEIARPNMAERETETSNSESKQDKAASSKEKN) shows a compositional bias: basic and acidic residues. Lys-740 is covalently cross-linked (Glycyl lysine isopeptide (Lys-Gly) (interchain with G-Cter in SUMO2)). Positions 786–797 (CNANSFEGSSTT) are enriched in polar residues. Over residues 798-809 (KSEESITVSDKE) the composition is skewed to basic and acidic residues. A compositionally biased stretch (polar residues) spans 905 to 914 (SVSSDVSEQG). A phosphoserine mark is found at Ser-908 and Ser-911. Positions 970–979 (VDLEDEKERS) are enriched in acidic residues. A Glycyl lysine isopeptide (Lys-Gly) (interchain with G-Cter in SUMO2) cross-link involves residue Lys-976.

It is found in the nucleus. Its function is as follows. May function as a transcription factor. This is Zinc finger protein 280D (ZNF280D) from Homo sapiens (Human).